Reading from the N-terminus, the 1067-residue chain is MEVTDIGNKEEGKVWHRKPTPGKSVLASLVRTAQQGKVVRFLHVTFDTTGDCFLAGDHHGNIYLFDISRNRFRLVLKTGQACTALAFNLRRTTEFLVALADYSIRCFDKDTKQLVSWMRGHEGAVSSISVHSSGRYAITTSSDTAQLWDLDTFQRKRKLNIRQSVGIQKVFFLPLSNTILSCFSDDSIFAWECDTLFCKYQLPLPDSGPRISYKAFAVTLDGKSLASGGRSNLLHLWCLESRQLVRVIQMPSQVRTIRQLEFLPDSFDGGASQTLGVLSQDGMMRFINIHTCKLLFHIGSHDEAITAVAVNPSGRHIVAVMDNGRINIYSVQNLTQELNKPPPAQVAVVSGSEGVPDLPNLKMKVRSEVLPRPKRISGRRPQVKLLSLPAASSAEDKENELPAGLNKKRLVALLKAFGEYPAKYRMFVWRSLLCLPENHAAYSSLTDKGLHSAFLTLHEKYPIKSQKLQRALQRVLSALAHWAAIFGEVEYLPLVAFPFVKLFQNNAMLCFEVVATVIENWCQHWFEYFPNPPLNILSMVENVVAHHDKELLQHLVDCGITSQLYVWPLLETLFSEVLTRDEWLRLFDNIFSNHPSFLLMACAAYIICCREPLLHCSQRQDFEYFFHHRNNLDVGAMIKEAYRFMSSTPADLHPRTMLSDFTPLTSGQYPVFNKYPEFIVEYQSRERERIRLQEMEYLRERQQMSALRADFVRRRAEEEAFYAQQELLQKAEEQRKHVLEQEEEKLTQQRAKLAAMKRELKVKELQLLDATRRRFLKHQQELQASQIKKLDQEISRKMDLRDKETATAVQDLEIRQMELEVQRKRLEQRLLKEQQHVGHKVEEEVRIKMKEAEENLKEMLHGAETNMQALEESLAEVCRLDLESDWQREVVERLQKADAERERSRGGVEELQRQTGTEEQGLVNAMREEAHRKKDEAAAQIQESLQPRPSTHSDGQRLMGIHSAYAPPGFAHRHACSAGLKGESLTDRNKSASFKQAETNMVCLNSSSPPESTSTAFSFCRGRTQLDSGERELLKEIRELRQKLAARAKEGSSASSQTVCTPTPVSP.

WD repeat units follow at residues 36–75 (GKVVRFLHVTFDTTGDCFLAGDHHGNIYLFDISRNRFRLV), 76–119 (LKTG…SWMR), 120–161 (GHEG…KLNI), 162–201 (RQSVGIQKVFFLPLSNTILSCFSDDSIFAWECDTLFCKYQ), 202–249 (LPLP…RVIQ), and 250–288 (MPSQVRTIRQLEFLPDSFDGGASQTLGVLSQDGMMRFIN). Positions 419-594 (EYPAKYRMFV…RLFDNIFSNH (176 aa)) constitute a Rab-GAP TBC domain. Positions 724–773 (QQELLQKAEEQRKHVLEQEEEKLTQQRAKLAAMKRELKVKELQLLDATRR) form a coiled coil. Basic and acidic residues-rich tracts occupy residues 896–912 (KADAERERSRGGVEELQ) and 926–937 (MREEAHRKKDEA). 2 disordered regions span residues 896 to 955 (KADA…HSDG) and 1045 to 1067 (AARAKEGSSASSQTVCTPTPVSP). Polar residues-rich tracts occupy residues 941 to 953 (IQESLQPRPSTHS) and 1052 to 1067 (SSASSQTVCTPTPVSP).

The protein localises to the cytoplasm. Its subcellular location is the cytoskeleton. It is found in the microtubule organizing center. The protein resides in the centrosome. It localises to the centriolar satellite. The protein localises to the cilium basal body. Its function is as follows. Molecular adapter which is involved in cilium biogenesis. Part of a functional complex including OFD1 a centriolar protein involved in cilium assembly. Could regulate the cAMP-dependent phosphorylation of OFD1, and its subsequent ubiquitination by PJA2 which ultimately leads to its proteasomal degradation. This is TBC1 domain family member 31 from Oryzias latipes (Japanese rice fish).